The sequence spans 732 residues: S-adenosyl-L-methionine-dependent tRNA 4-demethylwyosine synthase TYW1 (732 aa).

The Flavodoxin-like domain occupies 79–237 (VKIFYGSQTG…DFRAWKTKFI (159 aa)). Residues 85-89 (SQTGT) and 176-208 (VFGL…HRVM) contribute to the FMN site. The tract at residues 248–312 (RKKSCGGHCK…KDHQSLNSIV (65 aa)) is disordered. A compositionally biased stretch (basic and acidic residues) spans 259–286 (GKCESHQRGSEEREEGSHEQDELHHRDT). Positions 287–299 (EEEEPFESSSEEE) are enriched in acidic residues. The Radical SAM core domain maps to 400 to 644 (YGIESHRCME…VDLIPDYEIA (245 aa)). [4Fe-4S] cluster is bound by residues cysteine 416, cysteine 420, and cysteine 423.

Belongs to the TYW1 family. Requires [4Fe-4S] cluster as cofactor.

It carries out the reaction N(1)-methylguanosine(37) in tRNA(Phe) + pyruvate + S-adenosyl-L-methionine = 4-demethylwyosine(37) in tRNA(Phe) + 5'-deoxyadenosine + L-methionine + CO2 + H2O. It functions in the pathway tRNA modification; wybutosine-tRNA(Phe) biosynthesis. In terms of biological role, probable component of the wybutosine biosynthesis pathway. Wybutosine is a hyper modified guanosine with a tricyclic base found at the 3'-position adjacent to the anticodon of eukaryotic phenylalanine tRNA. Catalyzes the condensation of N-methylguanine with 2 carbon atoms from pyruvate to form the tricyclic 4-demethylwyosine, an intermediate in wybutosine biosynthesis. The chain is S-adenosyl-L-methionine-dependent tRNA 4-demethylwyosine synthase TYW1 (TYW1) from Pongo abelii (Sumatran orangutan).